The chain runs to 717 residues: MTPPPPPPPPPGPDPAVDSATDPCPEPQSLVVLFGATAGALGPDLGSDETDLILLVWQVVEPRSRQVGTLHKSLVRAEAAALSPQCREASGLSADSLARAESLDKVLQQFSQLVSGDVALLGGGPYVLCTDGQQLLRQVLHPEASRKNLVLPDTFFSFYDLRREFHMQHPSTCSARDLTVGTMAQDLGLETDATEDDFGVWEVKTMVAVILHLLEGSNGQLFSKPEVVKQKYETGPCSKADVVDNETVVRARGLPWQSSDQDVARFFKGLNIARGGVALCLNAQGRRNGEALIRFVDSEQRDLALQRHKHHMGVRYIEVYKATGEEFVKIAGGTSLEVARFLSREDQVILRLRGLPFSAGPTDVLGFLGPECPVTGGADGLLFVRHPDGRPTGDAFALFACEELAQAALRRHKGMLGKRYIELFRSTAAEVQQVLNRYAASPLLPTLTAPLLPIPFPLAGGTGRDCVRLRGLPYTATIEDILSFLGEAAADIRPHGVHMVLNQQGRPSGDAFIQMMSVERALAAAQRCHKKMMKERYVEVVPCSTEEMSRVLMGGSLSRSGLSPPPCKLPCLSPPTYATFQATPALIPTETTALYPSSALLPAARVPAAATPLAYYPGPATQLYMNYTAYYPSPPVSPTTVGYLTTPPTALASTPTTMLSQPGALVRMQGVPYTAGMKDLLSVFQAYQLAPDDYTTLMPVGDPPRTVLQAPKEWVCL.

Positions 1 to 14 (MTPPPPPPPPPGPD) are enriched in pro residues. The interval 1-23 (MTPPPPPPPPPGPDPAVDSATDP) is disordered. Residue Ser-83 is modified to Phosphoserine. RRM domains are found at residues 247-343 (TVVR…RFLS), 348-428 (VILR…RSTA), and 465-545 (DCVR…PCST). Ser-563 is modified (phosphoserine).

This sequence belongs to the ESRP family. As to quaternary structure, interacts with RBPMS. As to expression, epithelial cell-specific.

It is found in the nucleus. MRNA splicing factor that regulates the formation of epithelial cell-specific isoforms. Specifically regulates the expression of FGFR2-IIIb, an epithelial cell-specific isoform of FGFR2. Also regulates the splicing of CD44, CTNND1, ENAH, 3 transcripts that undergo changes in splicing during the epithelial-to-mesenchymal transition (EMT). Acts by directly binding specific sequences in mRNAs. Binds the GU-rich sequence motifs in the ISE/ISS-3, a cis-element regulatory region present in the mRNA of FGFR2. The sequence is that of Epithelial splicing regulatory protein 2 (Esrp2) from Mus musculus (Mouse).